Reading from the N-terminus, the 295-residue chain is MRHLITTKDFNKIEIMELFKEASDFLDEKPRTFLEGKSITTIFFENSTRTLSSFESAARRLGARVLRLDVSRSSSSKGETLYDTAANLDAMSPNAIVVRHANSGVPLILAKHMHCPVVNGGDGKHAHPTQALLDLFTIYNHFQSDVEGKKICIVGDIKNSRVAASNIELLSRFNLDITLVAPPHFMPNTHLKKYYKLDENIIANSDIIMSLRTQTERHNKTVYASLKDYANDFCIQKSLVKDKKLILLHPGPVNRNIDISDEMMSDERTLVLKQVKNGVAIRMAVLKKLILENEG.

Carbamoyl phosphate contacts are provided by R49 and T50. K77 contributes to the L-aspartate binding site. R99, H127, and Q130 together coordinate carbamoyl phosphate. L-aspartate contacts are provided by R161 and R212. The carbamoyl phosphate site is built by G251 and P252.

This sequence belongs to the aspartate/ornithine carbamoyltransferase superfamily. ATCase family. As to quaternary structure, heterododecamer (2C3:3R2) of six catalytic PyrB chains organized as two trimers (C3), and six regulatory PyrI chains organized as three dimers (R2).

It catalyses the reaction carbamoyl phosphate + L-aspartate = N-carbamoyl-L-aspartate + phosphate + H(+). It functions in the pathway pyrimidine metabolism; UMP biosynthesis via de novo pathway; (S)-dihydroorotate from bicarbonate: step 2/3. In terms of biological role, catalyzes the condensation of carbamoyl phosphate and aspartate to form carbamoyl aspartate and inorganic phosphate, the committed step in the de novo pyrimidine nucleotide biosynthesis pathway. The sequence is that of Aspartate carbamoyltransferase catalytic subunit from Campylobacter jejuni subsp. doylei (strain ATCC BAA-1458 / RM4099 / 269.97).